The chain runs to 397 residues: Serpin B10 (397 aa).

Cys-68 and Cys-395 are disulfide-bonded. Residues 74-77 (KKRK) carry the Nuclear localization signal motif.

Belongs to the serpin family. Ov-serpin subfamily. In terms of tissue distribution, expressed specifically in myeloid cells and the bone marrow.

The protein resides in the nucleus. The protein localises to the cytoplasm. Its function is as follows. Protease inhibitor that may play a role in the regulation of protease activities during hematopoiesis and apoptosis induced by TNF. May regulate protease activities in the cytoplasm and in the nucleus. The chain is Serpin B10 (SERPINB10) from Homo sapiens (Human).